We begin with the raw amino-acid sequence, 548 residues long: T-complex protein 1 subunit theta (548 aa).

Positions 527–548 are disordered; that stretch reads QATGGPKPRGPKAQDEDDDGMA.

This sequence belongs to the TCP-1 chaperonin family. In terms of assembly, heterooligomeric complex.

The protein localises to the cytoplasm. Molecular chaperone; assists the folding of proteins upon ATP hydrolysis. Known to play a role, in vitro, in the folding of actin and tubulin. Required for correct subcellular localization of pgl-1. This Caenorhabditis elegans protein is T-complex protein 1 subunit theta (cct-8).